The sequence spans 131 residues: Small ribosomal subunit protein bS6 (131 aa).

The interval 94-131 is disordered; the sequence is DAVTEESQLAKNADEKRARKATTRRPDSNDDNDNHSDD. Residues 117 to 131 are compositionally biased toward basic and acidic residues; it reads RRPDSNDDNDNHSDD.

Belongs to the bacterial ribosomal protein bS6 family.

In terms of biological role, binds together with bS18 to 16S ribosomal RNA. The polypeptide is Small ribosomal subunit protein bS6 (Psychrobacter cryohalolentis (strain ATCC BAA-1226 / DSM 17306 / VKM B-2378 / K5)).